The following is a 420-amino-acid chain: Glutamate dehydrogenase (420 aa).

Residue Lys105 is part of the active site. 220-226 (GYGNAGY) is a binding site for NAD(+).

Belongs to the Glu/Leu/Phe/Val dehydrogenases family. Homohexamer.

It is found in the cytoplasm. The enzyme catalyses L-glutamate + NAD(+) + H2O = 2-oxoglutarate + NH4(+) + NADH + H(+). The catalysed reaction is L-glutamate + NADP(+) + H2O = 2-oxoglutarate + NH4(+) + NADPH + H(+). The chain is Glutamate dehydrogenase (gdhA) from Pyrococcus horikoshii (strain ATCC 700860 / DSM 12428 / JCM 9974 / NBRC 100139 / OT-3).